The sequence spans 3326 residues: Protein unc-80 homolog (3326 aa).

Residues 152–164 (IENQGSPGQPCRS) are compositionally biased toward polar residues. Disordered regions lie at residues 152-178 (IENQ…RKTF), 243-267 (KRSS…QQGE), 283-317 (PKAT…RASL), and 450-469 (RKED…GKRR). Ser257 is subject to Phosphoserine. Residues 283-308 (PKATISGCHQGNSFDGSLSSQTSQER) show a composition bias toward polar residues. The residue at position 526 (Ser526) is a Phosphoserine. Disordered stretches follow at residues 536–560 (LSAR…SHGE), 697–785 (RKKS…DNIP), 967–1076 (GKKV…SRRI), 1405–1430 (EDSK…KKVP), and 1469–1516 (SSKL…LSNA). Composition is skewed to basic and acidic residues over residues 551–560 (LPDHSNSHGE) and 699–713 (KSEN…KRPS). The segment covering 723 to 737 (SSSSTSGFGAPSASG) has biased composition (low complexity). The segment covering 738–770 (AGDGGGEEGGGGDGGGGGGGGDGGGGGGGGGGP) has biased composition (gly residues). The span at 772-783 (EKNEKNQEKDDN) shows a compositional bias: basic and acidic residues. Positions 1038 to 1055 (SQSAASDTSSQSEQDTSE) are enriched in low complexity. The segment covering 1418–1429 (IKSDAGAEEKKV) has biased composition (basic and acidic residues). The next 2 membrane-spanning stretches (helical) occupy residues 2336–2356 (PFVL…DAAN) and 2466–2486 (IAAT…VEVL). A disordered region spans residues 2493-2515 (PQMSRSDQGHKGTTTANHTMSSG). A run of 2 helical transmembrane segments spans residues 2853–2873 (GLAE…LVCF) and 2899–2919 (LALW…FVLL). A compositionally biased stretch (polar residues) spans 3010–3032 (NTGTGTVWEQDSEPSQQASQDTL). A disordered region spans residues 3010–3052 (NTGTGTVWEQDSEPSQQASQDTLSRTDEEDEENDSVSMPSVVS). Ser3110 carries the phosphoserine modification. 3 disordered regions span residues 3122–3222 (LQQP…VLTS), 3236–3271 (PKQS…LSDP), and 3296–3326 (NGTE…ESHV). The span at 3127-3136 (GRKRGLRQLR) shows a compositional bias: basic residues. A compositionally biased stretch (polar residues) spans 3157–3168 (LSTTRRSIQPKT). Over residues 3298 to 3309 (TENPLLSSQFTF) the composition is skewed to polar residues. The segment covering 3315–3326 (GDTDSALDESHV) has biased composition (acidic residues).

Belongs to the unc-80 family. As to quaternary structure, NALCN complex consists of NALCN and auxiliary subunits, UNC79, UNC80 and NACL1. These auxiliary subunits are essential for the NALCN complex function. Interacts (via N-terminus half) with NALCN; this interaction facilitates NALCN surface localization. Interacts (via C-terminus) with UNC79. UNC80 bridges NALCN to UNC79. In terms of processing, phosphorylated on tyrosine residues. In terms of tissue distribution, expressed almost exclusively in the brain. Expressed in hippocampus and ventral tegmental area neurons.

Its subcellular location is the cell membrane. The protein resides in the cell projection. The protein localises to the dendrite. Functionally, auxiliary subunit of the NALCN sodium channel complex. The NALCN sodium channel complex is a voltage-gated ion channel responsible for the resting Na(+) permeability that controls neuronal excitability. This complex is activated by neuropeptides substance P, neurotensin. In addition, the channel is inhibited by extracellular Ca(2+) through the Ca(2+)-sensing receptor. UNC80 is essential for NALCN sensitivity to extracellular calcium. The chain is Protein unc-80 homolog (Unc80) from Mus musculus (Mouse).